The following is a 411-amino-acid chain: MSRSKRDNNFYSVEIADSTFTVLKRYQNLKPIGSGAQGIVCAAYDAILERNVAIKKLSRPFQNQTHAKRAYRELVLMKCVNHKNIIGLLNVFTPQKSLEEFQDVYIVMELMDANLCQVIQMELDHERMSYLLYQMLCGIKHLHSAGIIHRDLKPSNIVVKSDCTLKILDFGLARTAGTSFMMTPYVVTRYYRAPEVILGMGYKENVDLWSVGCIMGEMVCLKILFPGRDYIDQWNKVIEQLGTPCPEFMKKLQPTVRTYVENRPKYAGYSFEKLFPDVLFPADSEHNKLKASQARDLLSKMLVIDASKRISVDEALQHPYINVWYDPSEAEAPPPKIPDKQLDEREHTIEEWKELIYKEVMDLEERTKNGVIRGQPSPLGAAVINGSQHPVSSPSVNDMSSMSTDPTLASD.

The Protein kinase domain occupies 26–321; sequence YQNLKPIGSG…VDEALQHPYI (296 aa). Residues 32–40 and lysine 55 contribute to the ATP site; that span reads IGSGAQGIV. Position 116 is an S-nitrosocysteine; in inhibited form (cysteine 116). The Proton acceptor role is filled by aspartate 151. Threonine 183 is modified (phosphothreonine; by MAP2K7). A TXY motif is present at residues 183–185; that stretch reads TPY. Tyrosine 185 is modified (phosphotyrosine; by MAP2K4). Residues 368–411 are disordered; that stretch reads KNGVIRGQPSPLGAAVINGSQHPVSSPSVNDMSSMSTDPTLASD. Serine 377 carries the phosphoserine modification. Residues 390-403 are compositionally biased toward low complexity; sequence PVSSPSVNDMSSMS.

This sequence belongs to the protein kinase superfamily. CMGC Ser/Thr protein kinase family. MAP kinase subfamily. As to quaternary structure, forms a complex with MAPK8IP1 and ARHGEF28. Found in a complex with SH3RF1, RAC1, MAP3K11/MLK3, MAP2K7/MKK7 and MAPK8IP1/JIP1. Found in a complex with SH3RF1, RAC2, MAP3K7/TAK1, MAP2K7/MKK7, MAPK8IP1/JIP1 and MAPK9/JNK2. Binds to at least four scaffolding proteins, MAPK8IP1/JIP-1, MAPK8IP2/JIP-2, MAPK8IP3/JIP-3/JSAP1 and SPAG9/MAPK8IP4/JIP-4. These proteins also bind other components of the JNK signaling pathway. Interacts with TP53, WWOX. Interacts with JAMP. Interacts with NFATC4. Interacts (phosphorylated form) with NFE2; the interaction phosphorylates NFE2 in undifferentiated cells. Interacts with MECOM; regulates JNK signaling. Interacts with PIN1; this interaction mediates MAPK8 conformational changes leading to the binding of MAPK8 to its substrates. Interacts with HSF1 (via D domain and preferentially with hyperphosphorylated form); this interaction occurs under both normal growth conditions and immediately upon heat shock. Interacts with STMN2, STMN3 and STMN4. Interacts with GRIPAP1. Interacts with POU5F1; phosphorylates POU5F1 at 'Ser-347'. Interacts with HSF4. It depends on Mg(2+) as a cofactor. In terms of processing, dually phosphorylated on Thr-183 and Tyr-185 by MAP2K7 and MAP2K4, which activates the enzyme. Phosphorylated by TAOK2. Phosphorylated form is more concentrated at synapses than none-phosphorylated. Nitrosylated upon IFN-gamma-induced endogenous NO production, which inhibits the enzyme. May be phosphorylated at Thr-183 and Tyr-185 by MAP3K1/MEKK1.

Its subcellular location is the cytoplasm. It localises to the nucleus. The protein localises to the synapse. It carries out the reaction L-seryl-[protein] + ATP = O-phospho-L-seryl-[protein] + ADP + H(+). The catalysed reaction is L-threonyl-[protein] + ATP = O-phospho-L-threonyl-[protein] + ADP + H(+). Activated by threonine and tyrosine phosphorylation by either of two dual specificity kinases, MAP2K4 and MAP2K7. MAP2K4 shows a strong preference for Tyr-185 while MAP2K7 phosphorylates Tyr-183 preferentially. Inhibited by dual specificity phosphatases, such as DUSP1. Inhibited by SERPINB3. Inhibited by IFN-gamma-induced S-nitrosylation. Functionally, serine/threonine-protein kinase involved in various processes such as cell proliferation, differentiation, migration, transformation and programmed cell death. Extracellular stimuli such as pro-inflammatory cytokines or physical stress stimulate the stress-activated protein kinase/c-Jun N-terminal kinase (SAP/JNK) signaling pathway. In this cascade, two dual specificity kinases MAP2K4/MKK4 and MAP2K7/MKK7 phosphorylate and activate MAPK8/JNK1. In turn, MAPK8/JNK1 phosphorylates a number of transcription factors, primarily components of AP-1 such as JUN, JDP2 and ATF2 and thus regulates AP-1 transcriptional activity. Phosphorylates the replication licensing factor CDT1, inhibiting the interaction between CDT1 and the histone H4 acetylase HBO1 to replication origins. Loss of this interaction abrogates the acetylation required for replication initiation. Promotes stressed cell apoptosis by phosphorylating key regulatory factors including p53/TP53 and Yes-associates protein YAP1. In T-cells, MAPK8 and MAPK9 are required for polarized differentiation of T-helper cells into Th1 cells. Contributes to the survival of erythroid cells by phosphorylating the antagonist of cell death BAD upon EPO stimulation. Mediates starvation-induced BCL2 phosphorylation, BCL2 dissociation from BECN1, and thus activation of autophagy. Phosphorylates STMN2 and hence regulates microtubule dynamics, controlling neurite elongation in cortical neurons. In the developing brain, through its cytoplasmic activity on STMN2, negatively regulates the rate of exit from multipolar stage and of radial migration from the ventricular zone. Phosphorylates several other substrates including heat shock factor protein 4 (HSF4), the deacetylase SIRT1, ELK1, or the E3 ligase ITCH. Phosphorylates the CLOCK-BMAL1 heterodimer and plays a role in the regulation of the circadian clock. Phosphorylates the heat shock transcription factor HSF1, suppressing HSF1-induced transcriptional activity. Phosphorylates POU5F1, which results in the inhibition of POU5F1's transcriptional activity and enhances its proteasomal degradation. Phosphorylates JUND and this phosphorylation is inhibited in the presence of MEN1. In neurons, phosphorylates SYT4 which captures neuronal dense core vesicles at synapses. Phosphorylates EIF4ENIF1/4-ET in response to oxidative stress, promoting P-body assembly. Phosphorylates SIRT6 in response to oxidative stress, stimulating its mono-ADP-ribosyltransferase activity. Phosphorylates NLRP3, promoting assembly of the NLRP3 inflammasome. Phosphorylates ALKBH5 in response to reactive oxygen species (ROS), promoting ALKBH5 sumoylation and inactivation. This is Mitogen-activated protein kinase 8 (Mapk8) from Rattus norvegicus (Rat).